The primary structure comprises 89 residues: Large ribosomal subunit protein bL27 (89 aa).

The interval methionine 1–leucine 21 is disordered.

Belongs to the bacterial ribosomal protein bL27 family.

This chain is Large ribosomal subunit protein bL27, found in Bradyrhizobium diazoefficiens (strain JCM 10833 / BCRC 13528 / IAM 13628 / NBRC 14792 / USDA 110).